Reading from the N-terminus, the 217-residue chain is Ribonuclease HII (217 aa).

Positions 27–216 constitute an RNase H type-2 domain; sequence SRIAGVDEAG…VKESIREGIC (190 aa). Residues Asp-33, Glu-34, and Asp-126 each contribute to the a divalent metal cation site.

Belongs to the RNase HII family. Requires Mn(2+) as cofactor. Mg(2+) is required as a cofactor.

It is found in the cytoplasm. The enzyme catalyses Endonucleolytic cleavage to 5'-phosphomonoester.. Functionally, endonuclease that specifically degrades the RNA of RNA-DNA hybrids. The chain is Ribonuclease HII (rnhB) from Chlamydia muridarum (strain MoPn / Nigg).